Consider the following 132-residue polypeptide: Tyrosine phosphatase-like protein N2 (132 aa).

Positions 1-132 (MQGPMKNTVA…DILGRFQRVF (132 aa)) constitute a Tyrosine-protein phosphatase domain.

The protein belongs to the protein-tyrosine phosphatase family.

The protein is Tyrosine phosphatase-like protein N2 (N4) of Microplitis demolitor (Parasitoid wasp).